Consider the following 1040-residue polypeptide: V(D)J recombination-activating protein 1 (1040 aa).

The segment covering 39–53 (EKAPEEAQKEKDSSE) has biased composition (basic and acidic residues). Residues 39 to 71 (EKAPEEAQKEKDSSEGKPYLEQSPVVPEKPGGQ) form a disordered region. Lys-233 participates in a covalent cross-link: Glycyl lysine isopeptide (Lys-Gly) (interchain with G-Cter in ubiquitin). Cys-266, His-270, Cys-290, Cys-293, His-295, Cys-305, His-307, Cys-310, Cys-313, Cys-325, Cys-328, Cys-355, Cys-360, His-372, and His-376 together coordinate Zn(2+). The RING-type zinc finger occupies 290-329 (CQICEHILADPVETSCKHLFCRICILRCLKVMGSYCPSCR). The RAG1-type zinc-finger motif lies at 351–380 (LMVKCPAQDCNEEVSLEKYNHHVSSHKESK). Positions 389 to 456 (GGRPRQHLLS…QADELEAIMQ (68 aa)) form a DNA-binding region, NBD. Residues Asp-600, Asp-708, and Glu-962 each coordinate a divalent metal cation.

It belongs to the RAG1 family. In terms of assembly, homodimer. Component of the RAG complex composed of core components RAG1 and RAG2, and associated component HMGB1 or HMGB2. Interacts with DCAF1, leading to recruitment of the CUL4A-RBX1-DDB1-DCAF1/VPRBP complex to ubiquitinate proteins and limit error-prone repair during V(D)J recombination. Requires Mg(2+) as cofactor. The cofactor is Mn(2+). Autoubiquitinated in the presence of CDC34/UBCH3. Maturing lymphoid cells and central nervous system.

It is found in the nucleus. The enzyme catalyses S-ubiquitinyl-[E2 ubiquitin-conjugating enzyme]-L-cysteine + [acceptor protein]-L-lysine = [E2 ubiquitin-conjugating enzyme]-L-cysteine + N(6)-ubiquitinyl-[acceptor protein]-L-lysine.. Its function is as follows. Catalytic component of the RAG complex, a multiprotein complex that mediates the DNA cleavage phase during V(D)J recombination. V(D)J recombination assembles a diverse repertoire of immunoglobulin and T-cell receptor genes in developing B and T-lymphocytes through rearrangement of different V (variable), in some cases D (diversity), and J (joining) gene segments. In the RAG complex, RAG1 mediates the DNA-binding to the conserved recombination signal sequences (RSS) and catalyzes the DNA cleavage activities by introducing a double-strand break between the RSS and the adjacent coding segment. RAG2 is not a catalytic component but is required for all known catalytic activities. DNA cleavage occurs in 2 steps: a first nick is introduced in the top strand immediately upstream of the heptamer, generating a 3'-hydroxyl group that can attack the phosphodiester bond on the opposite strand in a direct transesterification reaction, thereby creating 4 DNA ends: 2 hairpin coding ends and 2 blunt, 5'-phosphorylated ends. The chromatin structure plays an essential role in the V(D)J recombination reactions and the presence of histone H3 trimethylated at 'Lys-4' (H3K4me3) stimulates both the nicking and haipinning steps. The RAG complex also plays a role in pre-B cell allelic exclusion, a process leading to expression of a single immunoglobulin heavy chain allele to enforce clonality and monospecific recognition by the B-cell antigen receptor (BCR) expressed on individual B-lymphocytes. The introduction of DNA breaks by the RAG complex on one immunoglobulin allele induces ATM-dependent repositioning of the other allele to pericentromeric heterochromatin, preventing accessibility to the RAG complex and recombination of the second allele. In addition to its endonuclease activity, RAG1 also acts as an E3 ubiquitin-protein ligase that mediates monoubiquitination of histone H3. Histone H3 monoubiquitination is required for the joining step of V(D)J recombination. Mediates polyubiquitination of KPNA1. The polypeptide is V(D)J recombination-activating protein 1 (Rag1) (Mus musculus (Mouse)).